A 130-amino-acid chain; its full sequence is Small ribosomal subunit protein uS9 (130 aa).

The interval 98-130 (LKRAGLLTRDPRMKERKKPGLKKARRSPQFSKR) is disordered. The span at 111-130 (KERKKPGLKKARRSPQFSKR) shows a compositional bias: basic residues.

This sequence belongs to the universal ribosomal protein uS9 family.

This is Small ribosomal subunit protein uS9 from Staphylococcus haemolyticus (strain JCSC1435).